We begin with the raw amino-acid sequence, 176 residues long: Ribosome maturation factor RimM (176 aa).

Residues 97-176 (DSEFYHRDLI…QILVDWDPDF (80 aa)) enclose the PRC barrel domain.

This sequence belongs to the RimM family. As to quaternary structure, binds ribosomal protein uS19.

The protein resides in the cytoplasm. In terms of biological role, an accessory protein needed during the final step in the assembly of 30S ribosomal subunit, possibly for assembly of the head region. Essential for efficient processing of 16S rRNA. May be needed both before and after RbfA during the maturation of 16S rRNA. It has affinity for free ribosomal 30S subunits but not for 70S ribosomes. The chain is Ribosome maturation factor RimM from Shewanella frigidimarina (strain NCIMB 400).